The sequence spans 301 residues: Glycine--tRNA ligase alpha subunit (301 aa).

The protein belongs to the class-II aminoacyl-tRNA synthetase family. In terms of assembly, tetramer of two alpha and two beta subunits.

The protein resides in the cytoplasm. The enzyme catalyses tRNA(Gly) + glycine + ATP = glycyl-tRNA(Gly) + AMP + diphosphate. This is Glycine--tRNA ligase alpha subunit from Shewanella denitrificans (strain OS217 / ATCC BAA-1090 / DSM 15013).